The chain runs to 146 residues: [Ribosomal protein bS18]-alanine N-acetyltransferase (146 aa).

The N-acetyltransferase domain maps to 2 to 146; the sequence is SIISQIEACD…ENAVVMACYL (145 aa). 69 to 71 is a binding site for acetyl-CoA; that stretch reads IAI. E103 (proton acceptor) is an active-site residue. Residue N108 participates in acetyl-CoA binding. The active-site Proton donor is Y114.

It belongs to the acetyltransferase family. RimI subfamily.

It localises to the cytoplasm. It catalyses the reaction N-terminal L-alanyl-[ribosomal protein bS18] + acetyl-CoA = N-terminal N(alpha)-acetyl-L-alanyl-[ribosomal protein bS18] + CoA + H(+). In terms of biological role, acetylates the N-terminal alanine of ribosomal protein bS18. This is [Ribosomal protein bS18]-alanine N-acetyltransferase from Haemophilus influenzae (strain ATCC 51907 / DSM 11121 / KW20 / Rd).